A 249-amino-acid polypeptide reads, in one-letter code: Green-light absorbing proteorhodopsin (249 aa).

The first 17 residues, 1–17 (MKLLLILGSVIALPTFA), serve as a signal peptide directing secretion. 7 consecutive transmembrane segments (helical) span residues 30-49 (GVSFWLVTAALLASTVFFFV), 62-84 (LTVSGLVTGIAFWHYMYMRGVWI), 99-121 (LLTVPLLICEFYLILAAATNVAG), 128-147 (LVGSLVMLVFGYMGEAGIMA), 151-168 (AFIIGCLAWVYMIYELWA), 189-211 (MMYIIIFGWAIYPVGYFTGYLMG), and 221-243 (LIYNLADFVNKILFGLIIWNVAV). Residue lysine 231 is modified to N6-(retinylidene)lysine.

This sequence belongs to the archaeal/bacterial/fungal opsin family. Post-translationally, contains one covalently linked retinal chromophore.

It is found in the cell membrane. Functionally, light-driven proton pump that generates photothrophic energy. This Gamma-proteobacterium EBAC31A08 protein is Green-light absorbing proteorhodopsin.